Consider the following 70-residue polypeptide: Cold shock-like protein CspJ (70 aa).

In terms of domain architecture, CSD spans 7–67; sequence GLVKWFNPEK…GPKGPSAVNV (61 aa).

The protein localises to the cytoplasm. The polypeptide is Cold shock-like protein CspJ (cspJ) (Salmonella typhi).